Consider the following 439-residue polypeptide: Deacetylvindoline O-acetyltransferase (439 aa).

The Proton acceptor role is filled by H158. A coiled-coil region spans residues 317–344 (TKLVINELRKEKQKIKNLSREKLTYVAQ). The active-site Proton acceptor is the D380.

This sequence belongs to the plant acyltransferase family. As to quaternary structure, monomer. In terms of tissue distribution, predominantly expressed in young leaves of mature plants. Low expression in stems and flowers and not detected in roots. Confined to the laticifer and idioblast cells of leaves, stems, and flower buds.

It localises to the cytoplasm. The protein localises to the nucleus. The catalysed reaction is 4-O-deacetylvindoline + acetyl-CoA = vindoline + CoA. Its pathway is alkaloid biosynthesis; vindoline biosynthesis. In terms of biological role, involved in the biosynthesis of vindoline, a precursor of vinblastine and vincristine. In Catharanthus roseus (Madagascar periwinkle), this protein is Deacetylvindoline O-acetyltransferase.